The sequence spans 623 residues: Leucine-rich repeat, immunoglobulin-like domain and transmembrane domain-containing protein 1 (623 aa).

The N-terminal stretch at 1-21 (MWVALGMLWLLALGGPHQAWS) is a signal peptide. One can recognise an LRRNT domain in the interval 22-59 (FCPSQCSCSLHILSDGSKARTVVCSDPDLTLPPASIPP). Residues 22–526 (FCPSQCSCSL…EVVDAEGTQR (505 aa)) lie on the Lumenal side of the membrane. LRR repeat units follow at residues 60 to 81 (DTCKLRLERTAIRRVPGETFRP), 84 to 105 (RLEQLWLPYNALSELSTLMLRG), 108 to 128 (RLRELRLPGNHLVTFPWAALK), 132 to 153 (QLQLLDLQANRLSTLPPEAVHF), and 156 to 177 (NLTFLDLSNNQLMRLPEELLDT). N156 carries an N-linked (GlcNAc...) asparagine glycan. Positions 201-253 (NPWVCDCRLYDLVHLLDGWASNLIFIEARLRCGSPRSLAGVAFSQLELRKCQS) constitute an LRRCT domain. Positions 266-332 (PLGSTVLLRC…SGDYICQAKN (67 aa)) constitute an Ig-like C2-type domain. C275 and C328 are joined by a disulfide. Residues N296 and N455 are each glycosylated (N-linked (GlcNAc...) asparagine). Residues 430–518 (MVRSLKVVGD…QCVIFSTDEV (89 aa)) form the Fibronectin type-III domain. Residues 525 to 548 (QRLINMVVISVAAIIALPPTLLVC) form an LRR 6 repeat. A helical membrane pass occupies residues 527–547 (LINMVVISVAAIIALPPTLLV). The Cytoplasmic segment spans residues 548–623 (CCGALRRRCH…GGRRINEYFC (76 aa)).

In terms of assembly, homodimer. Interacts with LRIT2; may form a heterodimer with LRIT2. Interacts (via its N-terminal extracellular domain) with metabotropic glutamate receptor GRM6. Interacts (via its extreme C-terminus) with the scaffold protein FRMPD2 (via the third PDZ domain); the interaction leads to their colocalization in photoreceptor synapses. As to expression, retina, outer segments of photoreceptor cells.

Its subcellular location is the endoplasmic reticulum membrane. It localises to the cell projection. It is found in the dendrite. Photoreceptor synaptic protein essential for normal vision. Involved in synapse formation in cone photoreceptor cells. The polypeptide is Leucine-rich repeat, immunoglobulin-like domain and transmembrane domain-containing protein 1 (Lrit1) (Rattus norvegicus (Rat)).